Here is a 185-residue protein sequence, read N- to C-terminus: Photosystem I assembly protein Ycf4 (185 aa).

A run of 2 helical transmembrane segments spans residues 20–40 (GNFF…AVGA) and 57–77 (ILFF…LFIS).

The protein belongs to the Ycf4 family.

The protein localises to the plastid. The protein resides in the chloroplast thylakoid membrane. In terms of biological role, seems to be required for the assembly of the photosystem I complex. In Oryza nivara (Indian wild rice), this protein is Photosystem I assembly protein Ycf4.